The following is a 268-amino-acid chain: ClpXP adapter protein SpxH (268 aa).

The protein belongs to the SpxH family. Interacts with Spx.

Its subcellular location is the cytoplasm. Functionally, adapter protein required for efficient degradation of Spx by ClpXP under non-stress conditions. Interaction with Spx stabilizes Spx and exposes the C-terminus of Spx for recognition and proteolysis by ClpXP. In Staphylococcus aureus (strain Mu3 / ATCC 700698), this protein is ClpXP adapter protein SpxH.